A 255-amino-acid chain; its full sequence is Thiazole synthase (255 aa).

The active-site Schiff-base intermediate with DXP is the lysine 96. Residues glycine 157, alanine 184 to glycine 185, and asparagine 206 to threonine 207 each bind 1-deoxy-D-xylulose 5-phosphate.

The protein belongs to the ThiG family. As to quaternary structure, homotetramer. Forms heterodimers with either ThiH or ThiS.

It localises to the cytoplasm. It catalyses the reaction [ThiS sulfur-carrier protein]-C-terminal-Gly-aminoethanethioate + 2-iminoacetate + 1-deoxy-D-xylulose 5-phosphate = [ThiS sulfur-carrier protein]-C-terminal Gly-Gly + 2-[(2R,5Z)-2-carboxy-4-methylthiazol-5(2H)-ylidene]ethyl phosphate + 2 H2O + H(+). It functions in the pathway cofactor biosynthesis; thiamine diphosphate biosynthesis. Catalyzes the rearrangement of 1-deoxy-D-xylulose 5-phosphate (DXP) to produce the thiazole phosphate moiety of thiamine. Sulfur is provided by the thiocarboxylate moiety of the carrier protein ThiS. In vitro, sulfur can be provided by H(2)S. This chain is Thiazole synthase, found in Clostridium acetobutylicum (strain ATCC 824 / DSM 792 / JCM 1419 / IAM 19013 / LMG 5710 / NBRC 13948 / NRRL B-527 / VKM B-1787 / 2291 / W).